We begin with the raw amino-acid sequence, 89 residues long: DNA/RNA-binding protein Alba (89 aa).

This sequence belongs to the histone-like Alba family.

The protein resides in the cytoplasm. It is found in the chromosome. Its function is as follows. Binds double-stranded DNA tightly but without sequence specificity. Involved in DNA compaction. In Methanococcus maripaludis (strain DSM 14266 / JCM 13030 / NBRC 101832 / S2 / LL), this protein is DNA/RNA-binding protein Alba.